Here is a 384-residue protein sequence, read N- to C-terminus: MDPNNCSHLNLEVDPFLSCNNTFNQTLNPPKMDNWFHPGIIYVIPAVYGLIIVIGLIGNITLIKIFCTVKSMRNVPNLFISSLALGDLLLLVTCAPVDASKYLADRWLFGRIGCKLIPFIQLTSVGVSVFTLTALSADRYKAIVRPMDIQASHALMKICLKAALIWIVSMLLAIPEAVFSDLHPFHVKDTNQTFISCAPYPHSNELHPKIHSMASFLVFYIIPLSIISVYYYFIARNLIQSAYNLPVEGNIHVKKQIESRKRLAKTVLVFVGLFAFCWLPNHVIYLYRSYHYSEVDTSMLHFITSICARLLAFTNSCVNPFALYLLSKSFRKQFNTQLLCCQPSLLNRSHSTGRSTTCMTSFKSTNPSATFSLINGNICHEGYV.

Residues 1–39 (MDPNNCSHLNLEVDPFLSCNNTFNQTLNPPKMDNWFHPG) lie on the Extracellular side of the membrane. N-linked (GlcNAc...) asparagine glycosylation is found at Asn5, Asn20, and Asn24. The chain crosses the membrane as a helical span at residues 40–63 (IIYVIPAVYGLIIVIGLIGNITLI). The Cytoplasmic segment spans residues 64–77 (KIFCTVKSMRNVPN). A helical membrane pass occupies residues 78 to 97 (LFISSLALGDLLLLVTCAPV). Residues 98-115 (DASKYLADRWLFGRIGCK) are Extracellular-facing. Residues Cys114 and Cys197 are joined by a disulfide bond. A helical transmembrane segment spans residues 116-137 (LIPFIQLTSVGVSVFTLTALSA). Topologically, residues 138 to 153 (DRYKAIVRPMDIQASH) are cytoplasmic. Residues 154 to 175 (ALMKICLKAALIWIVSMLLAIP) traverse the membrane as a helical segment. Residues 176–209 (EAVFSDLHPFHVKDTNQTFISCAPYPHSNELHPK) are Extracellular-facing. The chain crosses the membrane as a helical span at residues 210 to 235 (IHSMASFLVFYIIPLSIISVYYYFIA). The Cytoplasmic segment spans residues 236 to 265 (RNLIQSAYNLPVEGNIHVKKQIESRKRLAK). The helical transmembrane segment at 266–286 (TVLVFVGLFAFCWLPNHVIYL) threads the bilayer. The Extracellular segment spans residues 287–299 (YRSYHYSEVDTSM). Residues 300-326 (LHFITSICARLLAFTNSCVNPFALYLL) form a helical membrane-spanning segment. Residues 327-384 (SKSFRKQFNTQLLCCQPSLLNRSHSTGRSTTCMTSFKSTNPSATFSLINGNICHEGYV) are Cytoplasmic-facing. The S-palmitoyl cysteine moiety is linked to residue Cys340. Residue Ser351 is modified to Phosphoserine.

Belongs to the G-protein coupled receptor 1 family. In terms of tissue distribution, expressed in the hippocampal CA1 region (at protein level).

The protein localises to the cell membrane. Receptor for gastrin-releasing peptide (GRP). Signals via association with G proteins that activate a phosphatidylinositol-calcium second messenger system, resulting in Akt phosphorylation. Contributes to the regulation of food intake. Contributes to the perception of prurient stimuli and transmission of itch signals in the spinal cord that promote scratching behavior, but does not play a role in the perception of pain. Contributes primarily to nonhistaminergic itch sensation. In one study, shown to act in the amygdala as part of an inhibitory network which inhibits memory specifically related to learned fear. In another study, shown to contribute to disinhibition of glutamatergic cells in the auditory cortex via signaling on vasoactive intestinal peptide-expressing cells which leads to enhanced auditory fear memories. Contributes to the induction of sighing through signaling in the pre-Botzinger complex, a cluster of several thousand neurons in the ventrolateral medulla responsible for inspiration during respiratory activity. This Rattus norvegicus (Rat) protein is Gastrin-releasing peptide receptor (Grpr).